A 113-amino-acid polypeptide reads, in one-letter code: Cell cycle protein GpsB (113 aa).

A coiled-coil region spans residues Leu-36–Pro-68.

Belongs to the GpsB family. In terms of assembly, forms polymers through the coiled coil domains. Interacts with PBP1, MreC and EzrA.

It is found in the cytoplasm. In terms of biological role, divisome component that associates with the complex late in its assembly, after the Z-ring is formed, and is dependent on DivIC and PBP2B for its recruitment to the divisome. Together with EzrA, is a key component of the system that regulates PBP1 localization during cell cycle progression. Its main role could be the removal of PBP1 from the cell pole after pole maturation is completed. Also contributes to the recruitment of PBP1 to the division complex. Not essential for septum formation. The protein is Cell cycle protein GpsB of Listeria monocytogenes serotype 4b (strain CLIP80459).